A 468-amino-acid polypeptide reads, in one-letter code: Glutamine synthetase (468 aa).

In terms of domain architecture, GS beta-grasp spans 11-96 (HDVKWIDLRF…LVCDIIEPST (86 aa)). The GS catalytic domain maps to 104-468 (PRAIAHRAEE…PLEYELYYSC (365 aa)). Mg(2+) contacts are provided by glutamate 129 and glutamate 131. Glutamate 207 is an ATP binding site. Mg(2+) is bound by residues glutamate 212 and glutamate 220. L-glutamate contacts are provided by residues 264-265 (NG) and glycine 265. Histidine 269 contributes to the Mg(2+) binding site. ATP is bound by residues 271 to 273 (HMS) and serine 273. Positions 321, 327, and 339 each coordinate L-glutamate. ATP is bound by residues arginine 339, arginine 344, and arginine 352. Mg(2+) is bound at residue glutamate 357. L-glutamate is bound at residue arginine 359. Tyrosine 397 carries the O-AMP-tyrosine modification.

It belongs to the glutamine synthetase family. As to quaternary structure, oligomer of 12 subunits arranged in the form of two hexagons. The cofactor is Mg(2+). It depends on Mn(2+) as a cofactor.

It carries out the reaction L-glutamate + NH4(+) + ATP = L-glutamine + ADP + phosphate + H(+). Its activity is regulated as follows. When cellular nitrogen levels are high, the C-terminal adenylyl transferase (AT) of GlnE inhibits GlnA by covalent transfer of an adenylyl group from ATP to Tyr-397. Conversely, when nitrogen levels are low, the N-terminal adenylyl removase (AR) of GlnE activates GlnA by removing the adenylyl group by phosphorolysis. The fully adenylated enzyme complex is inactive. In terms of biological role, catalyzes the formation of glutamine from glutamate and ammonia. In vitro, can also use hydroxylamine, methylamine and ethylamine, with 32%, 7% and 1% activity compared to ammonia, respectively. This chain is Glutamine synthetase, found in Pseudomonas taetrolens.